An 807-amino-acid polypeptide reads, in one-letter code: Glycerol-3-phosphate acyltransferase (807 aa).

The HXXXXD motif signature appears at 308–313 (CHRSHM).

Belongs to the GPAT/DAPAT family.

The protein resides in the cell inner membrane. The catalysed reaction is sn-glycerol 3-phosphate + an acyl-CoA = a 1-acyl-sn-glycero-3-phosphate + CoA. The protein operates within phospholipid metabolism; CDP-diacylglycerol biosynthesis; CDP-diacylglycerol from sn-glycerol 3-phosphate: step 1/3. This Shewanella woodyi (strain ATCC 51908 / MS32) protein is Glycerol-3-phosphate acyltransferase.